The following is a 168-amino-acid chain: Ribosome maturation factor RimM (168 aa).

The region spanning 96–168 is the PRC barrel domain; it reads KDEYYWGDLV…RIRVAWQKDW (73 aa).

Belongs to the RimM family. In terms of assembly, binds ribosomal protein uS19.

Its subcellular location is the cytoplasm. Its function is as follows. An accessory protein needed during the final step in the assembly of 30S ribosomal subunit, possibly for assembly of the head region. Essential for efficient processing of 16S rRNA. May be needed both before and after RbfA during the maturation of 16S rRNA. It has affinity for free ribosomal 30S subunits but not for 70S ribosomes. This is Ribosome maturation factor RimM from Azoarcus sp. (strain BH72).